The primary structure comprises 233 residues: Gamma-glutamyl-hercynylcysteine sulfoxide hydrolase (233 aa).

The active-site Nucleophile is the cysteine 2. The Glutamine amidotransferase type-2 domain occupies 2–233; the sequence is CRHLGWLGAQ…TALDRAKGPR (232 aa).

The enzyme catalyses gamma-L-glutamyl-hercynylcysteine S-oxide + H2O = S-(hercyn-2-yl)-L-cysteine S-oxide + L-glutamate. The protein operates within amino-acid biosynthesis; ergothioneine biosynthesis. Catalyzes the hydrolysis of the gamma-glutamyl amide bond of hercynyl-gamma-L-glutamyl-L-cysteine sulfoxide to produce hercynylcysteine sulfoxide, a step in the biosynthesis pathway of ergothioneine. ERG is one of the major redox buffers which protects bacteria against redox stressors and antibiotics; loss of ERG or mycothiol (MSH, the other major redox buffer in this bacteria) leads to respiratory alterations and bioenergetic deficiencies that negatively impact virulence. This is Gamma-glutamyl-hercynylcysteine sulfoxide hydrolase from Mycobacterium tuberculosis (strain CDC 1551 / Oshkosh).